A 636-amino-acid chain; its full sequence is Chaperone protein DnaK (636 aa).

The residue at position 197 (threonine 197) is a Phosphothreonine; by autocatalysis. The segment covering 596 to 607 (LYQQAQEQQQSG) has biased composition (low complexity). Positions 596–636 (LYQQAQEQQQSGSSGGSSDEDVVEDAEIVDEEDEEKRDDNR) are disordered. The span at 613-636 (SDEDVVEDAEIVDEEDEEKRDDNR) shows a compositional bias: acidic residues.

The protein belongs to the heat shock protein 70 family.

Functionally, acts as a chaperone. The polypeptide is Chaperone protein DnaK (Rubrobacter xylanophilus (strain DSM 9941 / JCM 11954 / NBRC 16129 / PRD-1)).